The primary structure comprises 68 residues: Long neurotoxin 1 (68 aa).

5 disulfide bridges follow: C3-C20, C13-C41, C26-C30, C45-C56, and C57-C62.

The protein belongs to the three-finger toxin family. Long-chain subfamily. Type II alpha-neurotoxin sub-subfamily. As to expression, expressed by the venom gland.

The protein localises to the secreted. Binds with high affinity to muscular (alpha-1/CHRNA1) and neuronal (alpha-7/CHRNA7) nicotinic acetylcholine receptor (nAChR) and inhibits acetylcholine from binding to the receptor, thereby impairing neuromuscular and neuronal transmission. The protein is Long neurotoxin 1 of Aspidelaps scutatus (Shield-nose snake).